A 556-amino-acid polypeptide reads, in one-letter code: Protein misato homolog 1 (556 aa).

A Phosphoserine modification is found at Ser41.

Belongs to the misato family.

It is found in the mitochondrion outer membrane. Its subcellular location is the cytoplasm. In terms of biological role, involved in the regulation of mitochondrial distribution and morphology. Required for mitochondrial fusion and mitochondrial network formation. The sequence is that of Protein misato homolog 1 (Msto1) from Mus musculus (Mouse).